Consider the following 80-residue polypeptide: Cell division protein ZapB (80 aa).

A coiled-coil region spans residues 3–80 (FEVFEKLEAK…ALLGKMNEVN (78 aa)).

Belongs to the ZapB family. Homodimer. The ends of the coiled-coil dimer bind to each other, forming polymers. Interacts with FtsZ.

The protein localises to the cytoplasm. Its function is as follows. Non-essential, abundant cell division factor that is required for proper Z-ring formation. It is recruited early to the divisome by direct interaction with FtsZ, stimulating Z-ring assembly and thereby promoting cell division earlier in the cell cycle. Its recruitment to the Z-ring requires functional FtsA or ZipA. The sequence is that of Cell division protein ZapB from Edwardsiella ictaluri (strain 93-146).